A 359-amino-acid chain; its full sequence is Phosphoserine aminotransferase (359 aa).

Arginine 41 lines the L-glutamate pocket. Residues 75–76 (AS), tryptophan 101, threonine 152, aspartate 171, and glutamine 194 contribute to the pyridoxal 5'-phosphate site. Lysine 195 is subject to N6-(pyridoxal phosphate)lysine. A pyridoxal 5'-phosphate-binding site is contributed by 236–237 (NT).

This sequence belongs to the class-V pyridoxal-phosphate-dependent aminotransferase family. SerC subfamily. As to quaternary structure, homodimer. Requires pyridoxal 5'-phosphate as cofactor.

The protein resides in the cytoplasm. It carries out the reaction O-phospho-L-serine + 2-oxoglutarate = 3-phosphooxypyruvate + L-glutamate. The catalysed reaction is 4-(phosphooxy)-L-threonine + 2-oxoglutarate = (R)-3-hydroxy-2-oxo-4-phosphooxybutanoate + L-glutamate. It participates in amino-acid biosynthesis; L-serine biosynthesis; L-serine from 3-phospho-D-glycerate: step 2/3. It functions in the pathway cofactor biosynthesis; pyridoxine 5'-phosphate biosynthesis; pyridoxine 5'-phosphate from D-erythrose 4-phosphate: step 3/5. Its function is as follows. Catalyzes the reversible conversion of 3-phosphohydroxypyruvate to phosphoserine and of 3-hydroxy-2-oxo-4-phosphonooxybutanoate to phosphohydroxythreonine. In Acinetobacter baylyi (strain ATCC 33305 / BD413 / ADP1), this protein is Phosphoserine aminotransferase.